Here is a 418-residue protein sequence, read N- to C-terminus: cAMP-dependent protein kinase type II-beta regulatory subunit (418 aa).

The dimerization and phosphorylation stretch occupies residues 2–153 (SIEIPAGLTE…RLQEACKDIL (152 aa)). Over residues 45-57 (RKGTARFGHEGRT) the composition is skewed to basic and acidic residues. Positions 45–98 (RKGTARFGHEGRTWGDAGAAGGGGTPSKGVNFAEEPRHSDSENGEEEEEEAADA) are disordered. Threonine 69 carries the phosphothreonine modification. Residues serine 83 and serine 85 each carry the phosphoserine modification. Positions 86 to 96 (ENGEEEEEEAA) are enriched in acidic residues. Serine 114 is modified (phosphoserine). 3',5'-cyclic AMP is bound by residues 154 to 275 (LFKN…ESLP), glutamate 223, arginine 232, 276 to 418 (FLKS…EPTA), glutamate 352, and arginine 361.

The protein belongs to the cAMP-dependent kinase regulatory chain family. As to quaternary structure, the inactive form of the enzyme is composed of two regulatory chains and two catalytic chains. Activation by cAMP produces two active catalytic monomers and a regulatory dimer that binds four cAMP molecules. Interacts with PRKACA and PRKACB. Interacts with the phosphorylated form of PJA2. Forms a complex composed of PRKAR2B, GSK3B and GSKIP through GSKIP interaction; facilitates PKA-induced phosphorylation and regulates GSK3B activity. Post-translationally, phosphorylated by the activated catalytic chain. In terms of tissue distribution, four types of regulatory chains are found: I-alpha, I-beta, II-alpha, and II-beta. Their expression varies among tissues and is in some cases constitutive and in others inducible.

Its subcellular location is the cytoplasm. It localises to the cell membrane. Its function is as follows. Regulatory subunit of the cAMP-dependent protein kinases involved in cAMP signaling in cells. Type II regulatory chains mediate membrane association by binding to anchoring proteins, including the MAP2 kinase. The chain is cAMP-dependent protein kinase type II-beta regulatory subunit (PRKAR2B) from Bos taurus (Bovine).